A 156-amino-acid polypeptide reads, in one-letter code: Small ribosomal subunit protein uS7 (156 aa).

Belongs to the universal ribosomal protein uS7 family. Part of the 30S ribosomal subunit. Contacts proteins S9 and S11.

One of the primary rRNA binding proteins, it binds directly to 16S rRNA where it nucleates assembly of the head domain of the 30S subunit. Is located at the subunit interface close to the decoding center, probably blocks exit of the E-site tRNA. This chain is Small ribosomal subunit protein uS7, found in Methylobacterium radiotolerans (strain ATCC 27329 / DSM 1819 / JCM 2831 / NBRC 15690 / NCIMB 10815 / 0-1).